A 226-amino-acid chain; its full sequence is 2-C-methyl-D-erythritol 4-phosphate cytidylyltransferase (226 aa).

Belongs to the IspD/TarI cytidylyltransferase family. IspD subfamily.

It carries out the reaction 2-C-methyl-D-erythritol 4-phosphate + CTP + H(+) = 4-CDP-2-C-methyl-D-erythritol + diphosphate. The protein operates within isoprenoid biosynthesis; isopentenyl diphosphate biosynthesis via DXP pathway; isopentenyl diphosphate from 1-deoxy-D-xylulose 5-phosphate: step 2/6. Catalyzes the formation of 4-diphosphocytidyl-2-C-methyl-D-erythritol from CTP and 2-C-methyl-D-erythritol 4-phosphate (MEP). This is 2-C-methyl-D-erythritol 4-phosphate cytidylyltransferase from Bacillus thuringiensis (strain Al Hakam).